We begin with the raw amino-acid sequence, 316 residues long: tRNA pseudouridine synthase B (316 aa).

The Nucleophile role is filled by aspartate 47.

The protein belongs to the pseudouridine synthase TruB family. Type 1 subfamily.

It carries out the reaction uridine(55) in tRNA = pseudouridine(55) in tRNA. Its function is as follows. Responsible for synthesis of pseudouridine from uracil-55 in the psi GC loop of transfer RNAs. The sequence is that of tRNA pseudouridine synthase B from Photobacterium profundum (strain SS9).